We begin with the raw amino-acid sequence, 249 residues long: DNA polymerase sliding clamp (249 aa).

It belongs to the PCNA family. In terms of assembly, homotrimer. The subunits circularize to form a toroid; DNA passes through its center. Replication factor C (RFC) is required to load the toroid on the DNA.

In terms of biological role, sliding clamp subunit that acts as a moving platform for DNA processing. Responsible for tethering the catalytic subunit of DNA polymerase and other proteins to DNA during high-speed replication. The sequence is that of DNA polymerase sliding clamp from Thermococcus gammatolerans (strain DSM 15229 / JCM 11827 / EJ3).